Consider the following 94-residue polypeptide: Co-chaperonin GroES (94 aa).

This sequence belongs to the GroES chaperonin family. As to quaternary structure, heptamer of 7 subunits arranged in a ring. Interacts with the chaperonin GroEL.

Its subcellular location is the cytoplasm. Its function is as follows. Together with the chaperonin GroEL, plays an essential role in assisting protein folding. The GroEL-GroES system forms a nano-cage that allows encapsulation of the non-native substrate proteins and provides a physical environment optimized to promote and accelerate protein folding. GroES binds to the apical surface of the GroEL ring, thereby capping the opening of the GroEL channel. This is Co-chaperonin GroES from Streptococcus pneumoniae (strain ATCC 700669 / Spain 23F-1).